Here is a 242-residue protein sequence, read N- to C-terminus: Ribosomal RNA large subunit methyltransferase E (242 aa).

The S-adenosyl-L-methionine site is built by G88, W90, D111, D127, and D151. Residue K191 is the Proton acceptor of the active site.

It belongs to the class I-like SAM-binding methyltransferase superfamily. RNA methyltransferase RlmE family.

It localises to the cytoplasm. The enzyme catalyses uridine(2552) in 23S rRNA + S-adenosyl-L-methionine = 2'-O-methyluridine(2552) in 23S rRNA + S-adenosyl-L-homocysteine + H(+). Specifically methylates the uridine in position 2552 of 23S rRNA at the 2'-O position of the ribose in the fully assembled 50S ribosomal subunit. This is Ribosomal RNA large subunit methyltransferase E from Bartonella tribocorum (strain CIP 105476 / IBS 506).